The sequence spans 234 residues: Large ribosomal subunit protein uL1 (234 aa).

Belongs to the universal ribosomal protein uL1 family. In terms of assembly, part of the 50S ribosomal subunit.

Functionally, binds directly to 23S rRNA. The L1 stalk is quite mobile in the ribosome, and is involved in E site tRNA release. Protein L1 is also a translational repressor protein, it controls the translation of the L11 operon by binding to its mRNA. The polypeptide is Large ribosomal subunit protein uL1 (Klebsiella pneumoniae (strain 342)).